The sequence spans 242 residues: Ribonuclease PH (242 aa).

Phosphate-binding positions include Arg86 and 124-126; that span reads GTR.

It belongs to the RNase PH family. As to quaternary structure, homohexameric ring arranged as a trimer of dimers.

The catalysed reaction is tRNA(n+1) + phosphate = tRNA(n) + a ribonucleoside 5'-diphosphate. Phosphorolytic 3'-5' exoribonuclease that plays an important role in tRNA 3'-end maturation. Removes nucleotide residues following the 3'-CCA terminus of tRNAs; can also add nucleotides to the ends of RNA molecules by using nucleoside diphosphates as substrates, but this may not be physiologically important. Probably plays a role in initiation of 16S rRNA degradation (leading to ribosome degradation) during starvation. In Photorhabdus laumondii subsp. laumondii (strain DSM 15139 / CIP 105565 / TT01) (Photorhabdus luminescens subsp. laumondii), this protein is Ribonuclease PH.